Here is a 282-residue protein sequence, read N- to C-terminus: Ubiquinone biosynthesis protein COQ4 homolog, mitochondrial (282 aa).

The transit peptide at 1–30 (MFVRKSCYSLINATRRCLRYRQLSSTTAGT) directs the protein to the mitochondrion. Zn(2+)-binding residues include His186, Asp187, His190, and Glu202.

The protein belongs to the COQ4 family. In terms of assembly, component of a multi-subunit COQ enzyme complex. It depends on Zn(2+) as a cofactor.

It is found in the mitochondrion inner membrane. It catalyses the reaction a 4-hydroxy-3-methoxy-5-(all-trans-polyprenyl)benzoate + H(+) = a 2-methoxy-6-(all-trans-polyprenyl)phenol + CO2. Its pathway is cofactor biosynthesis; ubiquinone biosynthesis. Functionally, lyase that catalyzes the C1-decarboxylation of 4-hydroxy-3-methoxy-5-(all-trans-polyprenyl)benzoic acid into 2-methoxy-6-(all-trans-polyprenyl)phenol during ubiquinone biosynthesis. This is Ubiquinone biosynthesis protein COQ4 homolog, mitochondrial from Anopheles gambiae (African malaria mosquito).